The primary structure comprises 350 residues: Paired box protein Pax-4 (350 aa).

The segment at residues 5–131 (GISSMNQLGG…SSINRVLRAL (127 aa)) is a DNA-binding region (paired). A PAI subdomain region spans residues 8 to 64 (SMNQLGGLFVNGRPLPLDTRQQIVRLAVSGMRPCDISRILKVSNGCVSKILGRYYRT). An RED subdomain region spans residues 83 to 131 (PVVARIAQLKGECPALFAWEIQRQLCAEGLCTQDKTPSVSSINRVLRAL). Positions 153 to 172 (LTPHSGSETPRGTHPGTGHR) are disordered. Residues 170–229 (GHRNRTIFSPSQAEALEKEFQRGQYPDSVARGKLATATSLPEDTVRVWFSNRRAKWRRQE) constitute a DNA-binding region (homeobox). Residues 278 to 350 (CYQLCWATAP…ATPTHFSHWP (73 aa)) form a transcription repression region.

It belongs to the paired homeobox family.

It localises to the nucleus. Plays an important role in the differentiation and development of pancreatic islet beta cells. Transcriptional repressor that binds to a common element in the glucagon, insulin and somatostatin promoters. Competes with PAX6 for this same promoter binding site. Isoform 2 appears to be a dominant negative form antagonizing PAX4 transcriptional activity. The protein is Paired box protein Pax-4 (PAX4) of Homo sapiens (Human).